Reading from the N-terminus, the 288-residue chain is Glycine--tRNA ligase alpha subunit (288 aa).

Belongs to the class-II aminoacyl-tRNA synthetase family. In terms of assembly, tetramer of two alpha and two beta subunits.

It localises to the cytoplasm. It catalyses the reaction tRNA(Gly) + glycine + ATP = glycyl-tRNA(Gly) + AMP + diphosphate. This is Glycine--tRNA ligase alpha subunit from Rickettsia peacockii (strain Rustic).